Consider the following 421-residue polypeptide: MEF2-activating motif and SAP domain-containing transcriptional regulator (421 aa).

The MEF2-binding signature appears at 12-28 (IIRSKFRSVLQLRIHRR). Disordered stretches follow at residues 104 to 156 (PPEQ…PPSH), 188 to 296 (KAML…ASLT), and 322 to 406 (DQVE…ADLS). The 35-residue stretch at 165–199 (LEELTVSELRQQLRLRGLPVSGTKAMLLERMRGGT) folds into the SAP domain. Residues 191–214 (LLERMRGGTPPRERPKPRREDKEA) show a composition bias toward basic and acidic residues. Positions 208-421 (RREDKEAAAP…LLWELLPDPW (214 aa)) are transcription activation. Positions 230-241 (RLPSTVKASATN) are enriched in polar residues. Over residues 260–292 (ASVPAPTPSPALAPTPTPAPVPAPAPAPFPTPP) the composition is skewed to pro residues. Over residues 347-372 (SPDSEGFSSVFSSSLPSPTSSLSPSP) the composition is skewed to low complexity.

Interacts with MEF2C. As to expression, expressed in skeletal muscle, brain, placenta and spleen.

It localises to the nucleus. Transcriptional coactivator. Stimulates the transcriptional activity of MEF2C. Stimulates MYOD1 activity in part via MEF2, resulting in an enhancement of skeletal muscle differentiation. The chain is MEF2-activating motif and SAP domain-containing transcriptional regulator (Mamstr) from Mus musculus (Mouse).